A 273-amino-acid chain; its full sequence is tRNA (guanine-N(7)-)-methyltransferase (273 aa).

Residues 1–32 (MSATAKKSAAQLQREEEEARKKLKRLSKQGGV) are disordered. Residues glycine 88, 111–112 (EI), 150–151 (NC), and cysteine 170 each bind S-adenosyl-L-methionine. The active site involves aspartate 173. 248 to 250 (TEE) contributes to the S-adenosyl-L-methionine binding site.

The protein belongs to the class I-like SAM-binding methyltransferase superfamily. TrmB family. Forms a complex with trm82.

The protein resides in the nucleus. It carries out the reaction guanosine(46) in tRNA + S-adenosyl-L-methionine = N(7)-methylguanosine(46) in tRNA + S-adenosyl-L-homocysteine. Its pathway is tRNA modification; N(7)-methylguanine-tRNA biosynthesis. Catalyzes the formation of N(7)-methylguanine at position 46 (m7G46) in tRNA. This Schizosaccharomyces pombe (strain 972 / ATCC 24843) (Fission yeast) protein is tRNA (guanine-N(7)-)-methyltransferase (trm8).